A 20-amino-acid polypeptide reads, in one-letter code: Glutathione S-transferase 2 (20 aa).

Residues G1–L20 enclose the GST N-terminal domain. Y6 lines the glutathione pocket.

Belongs to the GST superfamily. Sigma family.

The enzyme catalyses RX + glutathione = an S-substituted glutathione + a halide anion + H(+). Conjugation of reduced glutathione to a wide number of exogenous and endogenous hydrophobic electrophiles. The chain is Glutathione S-transferase 2 (GST2) from Ascaris suum (Pig roundworm).